A 312-amino-acid polypeptide reads, in one-letter code: Ribosomal protein L11 methyltransferase (312 aa).

S-adenosyl-L-methionine is bound by residues Thr163, Gly184, Asp206, and Asn248.

The protein belongs to the methyltransferase superfamily. PrmA family.

Its subcellular location is the cytoplasm. It carries out the reaction L-lysyl-[protein] + 3 S-adenosyl-L-methionine = N(6),N(6),N(6)-trimethyl-L-lysyl-[protein] + 3 S-adenosyl-L-homocysteine + 3 H(+). In terms of biological role, methylates ribosomal protein L11. This Clostridium botulinum (strain Loch Maree / Type A3) protein is Ribosomal protein L11 methyltransferase.